The chain runs to 180 residues: Ribulose bisphosphate carboxylase small subunit, chloroplastic 3 (180 aa).

Residues methionine 1–lysine 56 constitute a chloroplast transit peptide.

It belongs to the RuBisCO small chain family. Heterohexadecamer of 8 large and 8 small subunits.

It is found in the plastid. The protein resides in the chloroplast. In terms of biological role, ruBisCO catalyzes two reactions: the carboxylation of D-ribulose 1,5-bisphosphate, the primary event in carbon dioxide fixation, as well as the oxidative fragmentation of the pentose substrate. Both reactions occur simultaneously and in competition at the same active site. Although the small subunit is not catalytic it is essential for maximal activity. Binds to abscisic acid (ABA); only half of the possible binding sites are occupied in the crystal; and there are indications this is a low affinity site. This is Ribulose bisphosphate carboxylase small subunit, chloroplastic 3 (RBCS.3A) from Pisum sativum (Garden pea).